The chain runs to 548 residues: Chaperonin GroEL 1 (548 aa).

ATP contacts are provided by residues 30 to 33 (TLGP), Lys51, 87 to 91 (DGTTT), Gly415, 479 to 481 (NAA), and Asp495.

This sequence belongs to the chaperonin (HSP60) family. In terms of assembly, forms a cylinder of 14 subunits composed of two heptameric rings stacked back-to-back. Interacts with the co-chaperonin GroES.

It is found in the cytoplasm. It catalyses the reaction ATP + H2O + a folded polypeptide = ADP + phosphate + an unfolded polypeptide.. Its function is as follows. Together with its co-chaperonin GroES, plays an essential role in assisting protein folding. The GroEL-GroES system forms a nano-cage that allows encapsulation of the non-native substrate proteins and provides a physical environment optimized to promote and accelerate protein folding. This is Chaperonin GroEL 1 from Anaeromyxobacter dehalogenans (strain 2CP-C).